The sequence spans 292 residues: Type II methyltransferase M.SmaI (292 aa).

Residues 110 to 130 (WRDKDDKNKGRAMSYRPPTPE) are disordered.

It belongs to the N(4)/N(6)-methyltransferase family. N(4) subfamily.

It carries out the reaction a 2'-deoxycytidine in DNA + S-adenosyl-L-methionine = an N(4)-methyl-2'-deoxycytidine in DNA + S-adenosyl-L-homocysteine + H(+). A beta subtype methylase thatnrecognizes the double-stranded sequence 5'-CCCGGG-3', methylates C-2 on both strands, and protects the DNA from cleavage by the SmaI endonuclease. The polypeptide is Type II methyltransferase M.SmaI (smaIM) (Serratia marcescens).